The chain runs to 158 residues: MMKCLLIATGQHVPTWVAQGFAEYHRRLSYWLPLELVEIEPSMRGKNHDPQRAIEDEGRRVMAALPKQPYAVTLDVKGKPLNSEQLAQRMEHWRGLGRNLVFLIGGPEGHSQEVLNISNERWSLGPLTLPHMLVRLIVVEQLYRAATILTNHPYHRGK.

Residues leucine 74, glycine 105, and 124-129 (LGPLTL) contribute to the S-adenosyl-L-methionine site.

This sequence belongs to the RNA methyltransferase RlmH family. Homodimer.

The protein localises to the cytoplasm. It catalyses the reaction pseudouridine(1915) in 23S rRNA + S-adenosyl-L-methionine = N(3)-methylpseudouridine(1915) in 23S rRNA + S-adenosyl-L-homocysteine + H(+). Specifically methylates the pseudouridine at position 1915 (m3Psi1915) in 23S rRNA. This Xylella fastidiosa (strain Temecula1 / ATCC 700964) protein is Ribosomal RNA large subunit methyltransferase H.